The chain runs to 423 residues: Glutamyl-tRNA reductase 2 (423 aa).

Residues 48–51 (TCYR), Ser103, 108–110 (EPQ), and Gln114 each bind substrate. Catalysis depends on Cys49, which acts as the Nucleophile. Residue 183-188 (GAGEMA) participates in NADP(+) binding.

Belongs to the glutamyl-tRNA reductase family. As to quaternary structure, homodimer.

The enzyme catalyses (S)-4-amino-5-oxopentanoate + tRNA(Glu) + NADP(+) = L-glutamyl-tRNA(Glu) + NADPH + H(+). The protein operates within porphyrin-containing compound metabolism; protoporphyrin-IX biosynthesis; 5-aminolevulinate from L-glutamyl-tRNA(Glu): step 1/2. Catalyzes the NADPH-dependent reduction of glutamyl-tRNA(Glu) to glutamate 1-semialdehyde (GSA). This chain is Glutamyl-tRNA reductase 2, found in Anaeromyxobacter sp. (strain Fw109-5).